The sequence spans 159 residues: Nucleotide-binding protein PST_3153 (159 aa).

It belongs to the YajQ family.

Functionally, nucleotide-binding protein. This chain is Nucleotide-binding protein PST_3153, found in Stutzerimonas stutzeri (strain A1501) (Pseudomonas stutzeri).